Consider the following 215-residue polypeptide: Ependymin-2 (215 aa).

Residues 1 to 20 (MHTVKLLCVVFSCLCAVAWA) form the signal peptide. 2 N-linked (GlcNAc...) asparagine glycosylation sites follow: N71 and N94.

It belongs to the ependymin family. As to quaternary structure, forms disulfide-linked dimers. Post-translationally, different glycosylation variants are known as EPD-beta and EPD-gamma. In terms of processing, binds calcium through the terminal sialic acids. In terms of tissue distribution, EPDs are synthesized in the meninx and secreted in the cerebrospinal fluid.

It localises to the secreted. In terms of biological role, may play a role in neural plasticity. May be involved during axon regeneration. The polypeptide is Ependymin-2 (epd2) (Carassius auratus (Goldfish)).